The primary structure comprises 122 residues: Zein-alpha B49 (122 aa).

This sequence belongs to the zein family.

Zeins are major seed storage proteins. The chain is Zein-alpha B49 from Zea mays (Maize).